A 540-amino-acid polypeptide reads, in one-letter code: Protein PALS2 (540 aa).

2 consecutive L27 domains span residues 1–48 and 49–107; these read MQQV…EDSK and LEAV…YDSP. Positions 130-209 constitute a PDZ domain; sequence ILGIHKRAGE…SVTLKILPSY (80 aa). Residues 215–284 enclose the SH3 domain; the sequence is PQQVFVKCHF…PSQFLEEKRK (70 aa). Residues 338 to 525 enclose the Guanylate kinase-like domain; sequence RKTLVLIGAQ…AFEKLQTAIE (188 aa). A Phosphotyrosine modification is found at Tyr-500.

It belongs to the MAGUK family. In terms of assembly, interacts with CADM1. Interacts with the LIN7 proteins. Abundant in testis, brain, and kidney with lower levels detectable in other tissues.

It is found in the membrane. In Homo sapiens (Human), this protein is Protein PALS2.